The chain runs to 477 residues: UDP-N-acetylmuramate--L-alanine ligase (477 aa).

Position 122-128 (122-128) interacts with ATP; the sequence is GTHGKTT.

This sequence belongs to the MurCDEF family.

The protein resides in the cytoplasm. It catalyses the reaction UDP-N-acetyl-alpha-D-muramate + L-alanine + ATP = UDP-N-acetyl-alpha-D-muramoyl-L-alanine + ADP + phosphate + H(+). The protein operates within cell wall biogenesis; peptidoglycan biosynthesis. Its function is as follows. Cell wall formation. The polypeptide is UDP-N-acetylmuramate--L-alanine ligase (Xanthomonas euvesicatoria pv. vesicatoria (strain 85-10) (Xanthomonas campestris pv. vesicatoria)).